Consider the following 538-residue polypeptide: Chaperonin GroEL (538 aa).

ATP-binding positions include 29-32 (TIGP), 86-90 (DGTTT), glycine 413, 476-478 (NAA), and aspartate 492.

The protein belongs to the chaperonin (HSP60) family. As to quaternary structure, forms a cylinder of 14 subunits composed of two heptameric rings stacked back-to-back. Interacts with the co-chaperonin GroES.

It is found in the cytoplasm. The catalysed reaction is ATP + H2O + a folded polypeptide = ADP + phosphate + an unfolded polypeptide.. In terms of biological role, together with its co-chaperonin GroES, plays an essential role in assisting protein folding. The GroEL-GroES system forms a nano-cage that allows encapsulation of the non-native substrate proteins and provides a physical environment optimized to promote and accelerate protein folding. The polypeptide is Chaperonin GroEL (Staphylococcus aureus (strain Mu3 / ATCC 700698)).